Here is a 591-residue protein sequence, read N- to C-terminus: Autotransporter adhesin NhhA (591 aa).

The first 51 residues, 1–51 (MNKIYRIIWNSALNAWVVVSELTRNHTKRASATVKTAVLATLLFATVQASA), serve as a signal peptide directing secretion. The segment at 52–503 (NNEEQEEDLY…TNVAQLKGVA (452 aa)) is surface exposed passenger domain. A translocator domain region spans residues 504-591 (QNLNNRIDNV…GASASVGYQW (88 aa)). A run of 4 beta stranded transmembrane segments spans residues 537-547 (GKSMMAIGGGT), 551-561 (EAGYAIGYSSI), 570-576 (KGTASGN), and 580-591 (HFGASASVGYQW).

Belongs to the autotransporter-2 (AT-2) (TC 1.B.40) family. Homotrimer.

It is found in the cell surface. It localises to the cell outer membrane. Involved in adhesion of capsulated meningococci to host epithelial cells. Interacts with laminin and heparan sulfate, promoting the adherence to the extracellular matrix (ECM) components. This chain is Autotransporter adhesin NhhA, found in Neisseria meningitidis serogroup B (strain ATCC BAA-335 / MC58).